A 110-amino-acid chain; its full sequence is V-type proton ATPase subunit G 1 (110 aa).

Belongs to the V-ATPase G subunit family. As to quaternary structure, V-ATPase is a heteromultimeric enzyme composed of a peripheral catalytic V1 complex (components A to H) attached to an integral membrane V0 proton pore complex (components: a, c, c', c'' and d).

Functionally, catalytic subunit of the peripheral V1 complex of vacuolar ATPase (V-ATPase). V-ATPase is responsible for acidifying a variety of intracellular compartments in eukaryotic cells. This chain is V-type proton ATPase subunit G 1 (VATG1), found in Nicotiana tabacum (Common tobacco).